Here is a 151-residue protein sequence, read N- to C-terminus: Protein NrdI (151 aa).

Belongs to the NrdI family.

Its function is as follows. Probably involved in ribonucleotide reductase function. The chain is Protein NrdI from Mesoplasma florum (strain ATCC 33453 / NBRC 100688 / NCTC 11704 / L1) (Acholeplasma florum).